The sequence spans 163 residues: Putative NOL1/NOP2/Sun domain family member 5B (163 aa).

Cys-93 acts as the Nucleophile in catalysis.

It belongs to the class I-like SAM-binding methyltransferase superfamily. RsmB/NOP family. Ubiquitous.

In Homo sapiens (Human), this protein is Putative NOL1/NOP2/Sun domain family member 5B (NSUN5P1).